The following is an 86-amino-acid chain: Anti-adapter protein IraP (86 aa).

A coiled-coil region spans residues 1 to 36 (MKNLIAELLFKLAQKEEESKELCAQVEALEIIVTAM).

This sequence belongs to the IraP family. As to quaternary structure, interacts with RssB.

It localises to the cytoplasm. Functionally, inhibits RpoS proteolysis by regulating RssB activity, thereby increasing the stability of the sigma stress factor RpoS especially during phosphate starvation, but also in stationary phase and during nitrogen starvation. Its effect on RpoS stability is due to its interaction with RssB, which probably blocks the interaction of RssB with RpoS, and the consequent delivery of the RssB-RpoS complex to the ClpXP protein degradation pathway. The sequence is that of Anti-adapter protein IraP from Escherichia coli (strain SE11).